A 607-amino-acid chain; its full sequence is Phosphatidylinositol 4-kinase LSB6 (607 aa).

Positions N73–N88 are enriched in polar residues. The disordered stretch occupies residues N73 to L93. The 362-residue stretch at G161 to I522 folds into the PI3K/PI4K catalytic domain. Residues I167–G173 form a G-loop region. Residues K318–N356 are disordered. Basic and acidic residues predominate over residues S319–T330. Over residues S341–T351 the composition is skewed to polar residues. The segment at R384–N392 is catalytic loop. Residues A411–Y431 form an activation loop region.

Belongs to the PI3/PI4-kinase family. Interacts with LAS17. Mg(2+) serves as cofactor. It depends on Mn(2+) as a cofactor.

Its subcellular location is the cell membrane. The protein localises to the vacuole membrane. The enzyme catalyses a 1,2-diacyl-sn-glycero-3-phospho-(1D-myo-inositol) + ATP = a 1,2-diacyl-sn-glycero-3-phospho-(1D-myo-inositol 4-phosphate) + ADP + H(+). Its function is as follows. May play a role in endocytic and/or exocytic pathways. This chain is Phosphatidylinositol 4-kinase LSB6 (LSB6), found in Saccharomyces cerevisiae (strain ATCC 204508 / S288c) (Baker's yeast).